A 459-amino-acid polypeptide reads, in one-letter code: Interleukin-7 receptor subunit alpha (459 aa).

A signal peptide spans 1–20 (MTILGTTFGMVFSLLQVVSG). Residues 21-239 (ESGYAQNGDL…EINNSSGEMD (219 aa)) are Extracellular-facing. C42 and C57 are disulfide-bonded. Residues N49 and N65 are each glycosylated (N-linked (GlcNAc...) asparagine). Cystine bridges form between C74/C82 and C108/C118. A Fibronectin type-III domain is found at 131 to 231 (APFDLSVVYR…PSYYFRTPEI (101 aa)). N-linked (GlcNAc...) asparagine glycosylation is found at N151 and N182. A WSXWS motif motif is present at residues 217–221 (WSEWS). N-linked (GlcNAc...) asparagine glycans are attached at residues N232 and N233. The chain crosses the membrane as a helical span at residues 240–264 (PILLTISILSFFSVALLVILACVLW). Over 265 to 459 (KKRIKPIVWP…VTMSSFYQNQ (195 aa)) the chain is Cytoplasmic. The Box 1 motif motif lies at 272–280 (VWPSLPDHK). T282 bears the Phosphothreonine; by PKC mark.

The protein belongs to the type I cytokine receptor family. Type 4 subfamily. The IL7 receptor is a heterodimer of IL7R and IL2RG. The TSLP receptor is a heterodimer of CRLF2 and IL7R. Interacts with CD53. In terms of processing, N-glycosylated IL-7Ralpha binds IL7 300-fold more tightly than the unglycosylated form. Ubiquitinated by MARCHF8; leading to lysosomal degradation.

It localises to the cell membrane. Its subcellular location is the secreted. In terms of biological role, receptor for interleukin-7. Also acts as a receptor for thymic stromal lymphopoietin (TSLP). The chain is Interleukin-7 receptor subunit alpha (IL7R) from Homo sapiens (Human).